A 153-amino-acid chain; its full sequence is Putative nuclear shuttle protein (153 aa).

Belongs to the nanoviridae nuclear shuttle protein family.

The protein localises to the host nucleus. It is found in the host cytoplasm. Putative nuclear shuttle protein. This Cicer arietinum (Chickpea) protein is Putative nuclear shuttle protein (DNA-N).